A 220-amino-acid polypeptide reads, in one-letter code: 2-hydroxy-3-keto-5-methylthiopentenyl-1-phosphate phosphatase (220 aa).

This sequence belongs to the HAD-like hydrolase superfamily. MtnX family.

It catalyses the reaction 2-hydroxy-5-methylsulfanyl-3-oxopent-1-enyl phosphate + H2O = 1,2-dihydroxy-5-(methylsulfanyl)pent-1-en-3-one + phosphate. It functions in the pathway amino-acid biosynthesis; L-methionine biosynthesis via salvage pathway; L-methionine from S-methyl-5-thio-alpha-D-ribose 1-phosphate: step 4/6. In terms of biological role, dephosphorylates 2-hydroxy-3-keto-5-methylthiopentenyl-1-phosphate (HK-MTPenyl-1-P) yielding 1,2-dihydroxy-3-keto-5-methylthiopentene (DHK-MTPene). The chain is 2-hydroxy-3-keto-5-methylthiopentenyl-1-phosphate phosphatase from Geobacillus kaustophilus (strain HTA426).